A 433-amino-acid polypeptide reads, in one-letter code: 3-phosphoshikimate 1-carboxyvinyltransferase (433 aa).

Residues Lys-22, Ser-23, and Arg-27 each coordinate 3-phosphoshikimate. Phosphoenolpyruvate is bound at residue Lys-22. Phosphoenolpyruvate-binding residues include Gly-96 and Arg-129. Ser-175, Ser-176, Gln-177, Ser-203, Asp-318, Asn-341, and Lys-345 together coordinate 3-phosphoshikimate. Position 177 (Gln-177) interacts with phosphoenolpyruvate. Catalysis depends on Asp-318, which acts as the Proton acceptor. Positions 349, 393, and 418 each coordinate phosphoenolpyruvate.

This sequence belongs to the EPSP synthase family. Monomer.

It localises to the cytoplasm. The catalysed reaction is 3-phosphoshikimate + phosphoenolpyruvate = 5-O-(1-carboxyvinyl)-3-phosphoshikimate + phosphate. It functions in the pathway metabolic intermediate biosynthesis; chorismate biosynthesis; chorismate from D-erythrose 4-phosphate and phosphoenolpyruvate: step 6/7. In terms of biological role, catalyzes the transfer of the enolpyruvyl moiety of phosphoenolpyruvate (PEP) to the 5-hydroxyl of shikimate-3-phosphate (S3P) to produce enolpyruvyl shikimate-3-phosphate and inorganic phosphate. The polypeptide is 3-phosphoshikimate 1-carboxyvinyltransferase (Mannheimia succiniciproducens (strain KCTC 0769BP / MBEL55E)).